The primary structure comprises 339 residues: Undecaprenyl-phosphate 4-deoxy-4-formamido-L-arabinose transferase (339 aa).

The next 2 helical transmembrane spans lie at 235–255 and 269–289; these read LSLV…FLLV and LFVL…GMGL.

This sequence belongs to the glycosyltransferase 2 family.

The protein localises to the cell inner membrane. The enzyme catalyses UDP-4-deoxy-4-formamido-beta-L-arabinose + di-trans,octa-cis-undecaprenyl phosphate = 4-deoxy-4-formamido-alpha-L-arabinopyranosyl di-trans,octa-cis-undecaprenyl phosphate + UDP. It functions in the pathway glycolipid biosynthesis; 4-amino-4-deoxy-alpha-L-arabinose undecaprenyl phosphate biosynthesis; 4-amino-4-deoxy-alpha-L-arabinose undecaprenyl phosphate from UDP-4-deoxy-4-formamido-beta-L-arabinose and undecaprenyl phosphate: step 1/2. Its pathway is bacterial outer membrane biogenesis; lipopolysaccharide biosynthesis. Catalyzes the transfer of 4-deoxy-4-formamido-L-arabinose from UDP to undecaprenyl phosphate. The modified arabinose is attached to lipid A and is required for resistance to polymyxin and cationic antimicrobial peptides. The sequence is that of Undecaprenyl-phosphate 4-deoxy-4-formamido-L-arabinose transferase from Pseudomonas aeruginosa (strain UCBPP-PA14).